The primary structure comprises 326 residues: Protoheme IX farnesyltransferase (326 aa).

The next 8 membrane-spanning stretches (helical) occupy residues 35–55 (LIPL…GWPL), 60–80 (LICT…LNCL), 106–126 (TAFI…VSGV), 129–149 (LAAG…TALL), 157–177 (IVVG…AATG), 185–205 (WLFA…ALLL), 238–258 (VLLS…YGLM), and 289–309 (WSIL…SALA).

This sequence belongs to the UbiA prenyltransferase family. Protoheme IX farnesyltransferase subfamily.

It localises to the cell inner membrane. It carries out the reaction heme b + (2E,6E)-farnesyl diphosphate + H2O = Fe(II)-heme o + diphosphate. The protein operates within porphyrin-containing compound metabolism; heme O biosynthesis; heme O from protoheme: step 1/1. Its function is as follows. Converts heme B (protoheme IX) to heme O by substitution of the vinyl group on carbon 2 of heme B porphyrin ring with a hydroxyethyl farnesyl side group. This Synechococcus sp. (strain CC9902) protein is Protoheme IX farnesyltransferase.